We begin with the raw amino-acid sequence, 156 residues long: dCTP deaminase (156 aa).

DCTP is bound by residues 79–84 (RSTFAR), Asp-95, Gln-124, and Tyr-138.

The protein belongs to the dCTP deaminase family. As to quaternary structure, homotrimer.

It carries out the reaction dCTP + H2O + H(+) = dUTP + NH4(+). The protein operates within pyrimidine metabolism; dUMP biosynthesis; dUMP from dCTP (dUTP route): step 1/2. In terms of biological role, catalyzes the deamination of dCTP to dUTP. The protein is dCTP deaminase of Thermococcus sibiricus (strain DSM 12597 / MM 739).